Consider the following 502-residue polypeptide: ATP synthase subunit alpha (502 aa).

Residue 169–176 participates in ATP binding; the sequence is GDRQTGKT.

Belongs to the ATPase alpha/beta chains family. In terms of assembly, F-type ATPases have 2 components, CF(1) - the catalytic core - and CF(0) - the membrane proton channel. CF(1) has five subunits: alpha(3), beta(3), gamma(1), delta(1), epsilon(1). CF(0) has three main subunits: a(1), b(2) and c(9-12). The alpha and beta chains form an alternating ring which encloses part of the gamma chain. CF(1) is attached to CF(0) by a central stalk formed by the gamma and epsilon chains, while a peripheral stalk is formed by the delta and b chains.

It is found in the cell inner membrane. The enzyme catalyses ATP + H2O + 4 H(+)(in) = ADP + phosphate + 5 H(+)(out). In terms of biological role, produces ATP from ADP in the presence of a proton gradient across the membrane. The alpha chain is a regulatory subunit. In Citrifermentans bemidjiense (strain ATCC BAA-1014 / DSM 16622 / JCM 12645 / Bem) (Geobacter bemidjiensis), this protein is ATP synthase subunit alpha.